The sequence spans 305 residues: Ribosomal protein L11 methyltransferase (305 aa).

The S-adenosyl-L-methionine site is built by threonine 152, glycine 173, aspartate 195, and asparagine 237.

It belongs to the methyltransferase superfamily. PrmA family.

It is found in the cytoplasm. It catalyses the reaction L-lysyl-[protein] + 3 S-adenosyl-L-methionine = N(6),N(6),N(6)-trimethyl-L-lysyl-[protein] + 3 S-adenosyl-L-homocysteine + 3 H(+). Functionally, methylates ribosomal protein L11. This chain is Ribosomal protein L11 methyltransferase, found in Hamiltonella defensa subsp. Acyrthosiphon pisum (strain 5AT).